Reading from the N-terminus, the 616-residue chain is 1-deoxy-D-xylulose-5-phosphate synthase (616 aa).

Residues His74 and 115 to 117 (GHS) each bind thiamine diphosphate. Mg(2+) is bound at residue Asp146. Thiamine diphosphate is bound by residues 147 to 148 (GA), Asn175, Tyr282, and Glu365. Asn175 is a Mg(2+) binding site.

It belongs to the transketolase family. DXPS subfamily. In terms of assembly, homodimer. Mg(2+) is required as a cofactor. The cofactor is thiamine diphosphate.

It carries out the reaction D-glyceraldehyde 3-phosphate + pyruvate + H(+) = 1-deoxy-D-xylulose 5-phosphate + CO2. The protein operates within metabolic intermediate biosynthesis; 1-deoxy-D-xylulose 5-phosphate biosynthesis; 1-deoxy-D-xylulose 5-phosphate from D-glyceraldehyde 3-phosphate and pyruvate: step 1/1. Catalyzes the acyloin condensation reaction between C atoms 2 and 3 of pyruvate and glyceraldehyde 3-phosphate to yield 1-deoxy-D-xylulose-5-phosphate (DXP). This chain is 1-deoxy-D-xylulose-5-phosphate synthase, found in Chromobacterium violaceum (strain ATCC 12472 / DSM 30191 / JCM 1249 / CCUG 213 / NBRC 12614 / NCIMB 9131 / NCTC 9757 / MK).